Reading from the N-terminus, the 369-residue chain is UDP-N-acetylglucosamine--N-acetylmuramyl-(pentapeptide) pyrophosphoryl-undecaprenol N-acetylglucosamine transferase (369 aa).

UDP-N-acetyl-alpha-D-glucosamine is bound by residues 15–17, asparagine 126, arginine 169, serine 197, and glutamine 299; that span reads TGG.

Belongs to the glycosyltransferase 28 family. MurG subfamily.

Its subcellular location is the cell inner membrane. It catalyses the reaction di-trans,octa-cis-undecaprenyl diphospho-N-acetyl-alpha-D-muramoyl-L-alanyl-D-glutamyl-meso-2,6-diaminopimeloyl-D-alanyl-D-alanine + UDP-N-acetyl-alpha-D-glucosamine = di-trans,octa-cis-undecaprenyl diphospho-[N-acetyl-alpha-D-glucosaminyl-(1-&gt;4)]-N-acetyl-alpha-D-muramoyl-L-alanyl-D-glutamyl-meso-2,6-diaminopimeloyl-D-alanyl-D-alanine + UDP + H(+). Its pathway is cell wall biogenesis; peptidoglycan biosynthesis. Cell wall formation. Catalyzes the transfer of a GlcNAc subunit on undecaprenyl-pyrophosphoryl-MurNAc-pentapeptide (lipid intermediate I) to form undecaprenyl-pyrophosphoryl-MurNAc-(pentapeptide)GlcNAc (lipid intermediate II). This is UDP-N-acetylglucosamine--N-acetylmuramyl-(pentapeptide) pyrophosphoryl-undecaprenol N-acetylglucosamine transferase from Methylobacterium radiotolerans (strain ATCC 27329 / DSM 1819 / JCM 2831 / NBRC 15690 / NCIMB 10815 / 0-1).